Here is a 460-residue protein sequence, read N- to C-terminus: Omega-3 fatty acid desaturase, chloroplastic (460 aa).

The Histidine box-1 motif lies at 177-181 (HDCGH). The short motif at 213-217 (HRTHH) is the Histidine box-2 element. The Histidine box-3 motif lies at 380 to 384 (HVIHH).

Belongs to the fatty acid desaturase type 1 family.

It is found in the plastid. Its subcellular location is the chloroplast membrane. Its pathway is lipid metabolism; polyunsaturated fatty acid biosynthesis. In terms of biological role, chloroplast omega-3 fatty acid desaturase introduces the third double bond in the biosynthesis of 16:3 and 18:3 fatty acids, important constituents of plant membranes. It is thought to use ferredoxin as an electron donor and to act on fatty acids esterified to galactolipids, sulfolipids and phosphatidylglycerol. This chain is Omega-3 fatty acid desaturase, chloroplastic (FAD7A-1), found in Ricinus communis (Castor bean).